Consider the following 496-residue polypeptide: Protein disulfide-isomerase (496 aa).

The first 18 residues, 1–18 (MKFLICALFLAASYVAAS), serve as a signal peptide directing secretion. 2 consecutive Thioredoxin domains span residues 19–134 (AEAE…KKTG) and 349–474 (GKLK…ANGE). Residues Cys56, Cys59, Cys397, and Cys400 each act as nucleophile in the active site. Intrachain disulfides connect Cys56–Cys59 and Cys397–Cys400. The interval 473 to 496 (GEVADSEPVEETEEEEEAPKKDEL) is disordered. Residues 476-489 (ADSEPVEETEEEEE) are compositionally biased toward acidic residues. Positions 493 to 496 (KDEL) match the Prevents secretion from ER motif.

The protein belongs to the protein disulfide isomerase family. Homodimer. Expressed in all head and body tissues.

It is found in the endoplasmic reticulum lumen. It catalyses the reaction Catalyzes the rearrangement of -S-S- bonds in proteins.. Functionally, participates in the folding of proteins containing disulfide bonds. This Drosophila melanogaster (Fruit fly) protein is Protein disulfide-isomerase (Pdi).